The following is a 186-amino-acid chain: uncharacterized protein (186 aa).

It belongs to the geranylgeranyl reductase family. ChlP subfamily.

This is an uncharacterized protein from Methanosarcina barkeri.